A 180-amino-acid chain; its full sequence is Cytidylate kinase (180 aa).

Position 7-15 (7-15) interacts with ATP; sequence GPPGSGKST.

This sequence belongs to the cytidylate kinase family. Type 2 subfamily.

Its subcellular location is the cytoplasm. The catalysed reaction is CMP + ATP = CDP + ADP. It catalyses the reaction dCMP + ATP = dCDP + ADP. The chain is Cytidylate kinase from Sulfurisphaera tokodaii (strain DSM 16993 / JCM 10545 / NBRC 100140 / 7) (Sulfolobus tokodaii).